The following is a 445-amino-acid chain: Damage suppressor protein (445 aa).

2 stretches are compositionally biased toward polar residues: residues 1–15 (MAST…SSTG) and 25–47 (SQGS…SATS). Disordered regions lie at residues 1–145 (MAST…HSVI) and 203–445 (YHSV…RKRK). Residues 61-73 (SSTTAGSSSTQGQ) are compositionally biased toward low complexity. Residues 74-87 (KFSTTPTDPKTFSS) show a composition bias toward polar residues. The span at 88–97 (DQKEKSKSPA) shows a compositional bias: basic and acidic residues. Low complexity predominate over residues 117–138 (DAKSSGQSQGQSKDSGKSSSDS). Over residues 207-228 (VGDKTDDKKEGEHSGDKKDDSK) the composition is skewed to basic and acidic residues. Residues 208-445 (GDKTDDKKEG…GGKAGGRKRK (238 aa)) are required and sufficient for DNA-binding and co-localization with nuclear DNA. The span at 245-256 (ETSGQAESSSGN) shows a compositional bias: polar residues. Residues 257 to 306 (EGAAPAKGRGRGRPPAAAKGVAKGAAKGAAASKGAKSGAESSKGGEQSSG) are compositionally biased toward low complexity. The span at 329 to 338 (GEGGASGSEG) shows a compositional bias: gly residues. The required for nucleosome binding and for the protection of chromatin from hydroxyl radical-mediated DNA damage stretch occupies residues 360–445 (EPPRRSSRLT…GGKAGGRKRK (86 aa)). The span at 367 to 431 (RLTSSGTGAG…ASKAPQNGAG (65 aa)) shows a compositional bias: low complexity. A compositionally biased stretch (basic residues) spans 432–445 (AKKKGGKAGGRKRK).

It localises to the nucleus. Its function is as follows. Unique chromatin-associating protein that contributes to the organism's exceptional tolerance to harsh environmental stresses. Binds with a higher affinity to nucleosomes than to free DNA. Protects chromatin from damage caused by hydroxyl radical-mediated cleavage induced by X-rays or treatment with hydrogen peroxide. Suppresses X-ray-induced DNA damage that includes single-strand breaks (SSBs) as well as more hazardous double-strand breaks (DSBs), and improves radiotolerance. Also shields DNA against reactive oxygen species (ROS). The sequence is that of Damage suppressor protein from Ramazzottius varieornatus (Water bear).